A 178-amino-acid chain; its full sequence is CASP-like protein 5A1 (178 aa).

A disordered region spans residues 1–24; sequence MFASRPAVHPVEAPPPTDPVEQPT. Topologically, residues 1–37 are cytoplasmic; that stretch reads MFASRPAVHPVEAPPPTDPVEQPTGVLMKDLPGMPGT. A helical membrane pass occupies residues 38 to 58; sequence AGGLGLRVAQFVFAGVALAVM. The Extracellular segment spans residues 59-69; it reads ASTSDFPSVTA. Residues 70–90 traverse the membrane as a helical segment; that stretch reads FCYLVAATIMQCLWSFSLAIV. Over 91–105 the chain is Cytoplasmic; sequence DIYALLVKRCLRNRR. The helical transmembrane segment at 106 to 126 threads the bilayer; that stretch reads AVCLFAIGDGITAALTFGAAC. The Extracellular portion of the chain corresponds to 127-152; that stretch reads SSAGITVLIDNDLNICAENHCGSFKT. Residues 153-173 traverse the membrane as a helical segment; sequence ATALAFMSWFALTPSFLLNFW. Residues 174–178 are Cytoplasmic-facing; sequence SMAAR.

This sequence belongs to the Casparian strip membrane proteins (CASP) family. Homodimer and heterodimers.

Its subcellular location is the cell membrane. In Brachypodium distachyon (Purple false brome), this protein is CASP-like protein 5A1.